Consider the following 266-residue polypeptide: Phosphatidate cytidylyltransferase (266 aa).

8 helical membrane passes run 16 to 36 (FVLI…LFWA), 52 to 72 (LFQV…WVAA), 78 to 98 (PIEC…YQKA), 101 to 121 (SEAI…FGVY), 125 to 145 (GAVA…GAFF), 164 to 184 (LEGA…VGMG), 186 to 206 (LSGG…VAVF), and 237 to 257 (LDSM…LEIW).

The protein belongs to the CDS family.

It localises to the cell inner membrane. It catalyses the reaction a 1,2-diacyl-sn-glycero-3-phosphate + CTP + H(+) = a CDP-1,2-diacyl-sn-glycerol + diphosphate. The protein operates within phospholipid metabolism; CDP-diacylglycerol biosynthesis; CDP-diacylglycerol from sn-glycerol 3-phosphate: step 3/3. The polypeptide is Phosphatidate cytidylyltransferase (cdsA) (Helicobacter pylori (strain ATCC 700392 / 26695) (Campylobacter pylori)).